A 2567-amino-acid chain; its full sequence is Unconventional myosin-XVIIIb (2567 aa).

The disordered stretch occupies residues 41–508 (LVRGTEKEAK…SRDSDQAPED (468 aa)). Basic and acidic residues predominate over residues 44 to 54 (GTEKEAKEARQ). Over residues 71-104 (SISQPNSKSSSGTRSGSQQISQDDQSSSPGSSDI) the composition is skewed to low complexity. 2 stretches are compositionally biased toward basic and acidic residues: residues 105-116 (LGKESEGSRSPD) and 160-176 (LDPDSAKPEKTHPHDAP). Residues 196–206 (SRTPCGSQAST) show a composition bias toward polar residues. Basic and acidic residues-rich tracts occupy residues 251 to 265 (TELKEAEPQGKDRQG), 278 to 287 (RPGKAEKEGA), and 326 to 349 (SKWDGPQNKKDKEGVLLSKAEKTG). Polar residues predominate over residues 350–362 (EPQTQMEKTSQVQ). 4 stretches are compositionally biased toward basic and acidic residues: residues 367–377 (DDLRMGEKAGE), 410–420 (SQTEKGCEAPK), 471–485 (LEKDAERPRIRKENQ), and 492–508 (EEGKGGQSRDSDQAPED). The region spanning 571 to 1333 (DQVEDLASLI…VISRLEKQRE (763 aa)) is the Myosin motor domain. An ATP-binding site is contributed by 660 to 667 (GWSGAGKT). Residues 1208–1232 (VESRSGQESPPPPQPGRDKPGAGGP) are disordered. The segment at 1213–1240 (GQESPPPPQPGRDKPGAGGPLALDIPAL) is GPA. Serine 1216 is subject to Phosphoserine. Positions 1336 to 1365 (VSQSIVLFQAACKGFLSRQEFKKLKIRRLA) constitute an IQ domain. Coiled coils occupy residues 1396 to 1783 (SATI…GLIG), 1825 to 1961 (KTSV…STVD), and 2014 to 2090 (ESQQ…VASS). A tail region spans residues 1426–2083 (NELRQNTDLL…IRRIADLQAA (658 aa)). At serine 1829 the chain carries Phosphoserine. The span at 2139-2153 (TMRTPSRQSATSSRI) shows a compositional bias: polar residues. Disordered stretches follow at residues 2139 to 2194 (TMRT…PVSP) and 2217 to 2249 (STERLEPASSPLASRSTNTSPLSREKLPSPSAA). Over residues 2158–2167 (INEEAGDTER) the composition is skewed to basic and acidic residues. Residues 2168 to 2185 (TQSALALSRARSTNVHSK) show a composition bias toward polar residues. Residue serine 2193 is modified to Phosphoserine. Over residues 2227–2238 (PLASRSTNTSPL) the composition is skewed to polar residues. A phosphoserine mark is found at serine 2296 and serine 2309. The interval 2357–2376 (SRPSMGRKLSSPTTPRDMLL) is disordered. The residue at position 2377 (serine 2377) is a Phosphoserine. Disordered stretches follow at residues 2444 to 2471 (FLPAIRKPQTPTSLAGSAKGGQDGSQRS) and 2494 to 2567 (KSPE…YLQK). Basic and acidic residues predominate over residues 2494–2504 (KSPEPKEDPAH). A compositionally biased stretch (low complexity) spans 2506–2520 (SDSSSSSGSIVSFKS). Basic and acidic residues predominate over residues 2537 to 2556 (GGERTSPERREPGTGRKDDD).

It belongs to the TRAFAC class myosin-kinesin ATPase superfamily. Myosin family. As to quaternary structure, homodimer. May interact with F actin through the GPA motif (Gly/Pro/Ala-rich). As to expression, selectively expressed in cardiac and skeletal muscles. Weakly expressed in testis, pancreas, placenta, prostate, lung and thymus.

The protein resides in the cytoplasm. It is found in the nucleus. It localises to the myofibril. Its subcellular location is the sarcomere. In terms of biological role, may be involved in intracellular trafficking of the muscle cell when in the cytoplasm, whereas entering the nucleus, may be involved in the regulation of muscle specific genes. May play a role in the control of tumor development and progression; restored MYO18B expression in lung cancer cells suppresses anchorage-independent growth. The polypeptide is Unconventional myosin-XVIIIb (MYO18B) (Homo sapiens (Human)).